The following is an 832-amino-acid chain: Protein P (832 aa).

The segment at 1–177 (MPLSYQHFRK…FCGSPYSWEQ (177 aa)) is terminal protein domain (TP). Residues 178–335 (ELQHGAESFN…HCLSHLVNLL (158 aa)) are spacer. Composition is skewed to polar residues over residues 205-220 (SKHQ…QQGQ) and 251-263 (SGHN…ESAS). The segment at 205–263 (SKHQQSRLGLQPQQGQLAKGQRGRSGSVRSRAHSATRRSVGVEPSGSGHNNNSASESAS) is disordered. Residues 336-679 (EDWGPCTEHG…YATLYPVARQ (344 aa)) form a polymerase/reverse transcriptase domain (RT) region. In terms of domain architecture, Reverse transcriptase spans 346-589 (KHHIRIPRTP…YSLNFMGYVI (244 aa)). The Mg(2+) site is built by Asp-418, Asp-540, and Asp-541.

This sequence belongs to the hepadnaviridae P protein family.

The enzyme catalyses DNA(n) + a 2'-deoxyribonucleoside 5'-triphosphate = DNA(n+1) + diphosphate. It catalyses the reaction Endonucleolytic cleavage to 5'-phosphomonoester.. Activated by host HSP70 and HSP40 in vitro to be able to bind the epsilon loop of the pgRNA. Because deletion of the RNase H region renders the protein partly chaperone-independent, the chaperones may be needed indirectly to relieve occlusion of the RNA-binding site by this domain. Inhibited by several reverse-transcriptase inhibitors: Lamivudine, Adefovir and Entecavir. In terms of biological role, multifunctional enzyme that converts the viral RNA genome into dsDNA in viral cytoplasmic capsids. This enzyme displays a DNA polymerase activity that can copy either DNA or RNA templates, and a ribonuclease H (RNase H) activity that cleaves the RNA strand of RNA-DNA heteroduplexes in a partially processive 3'- to 5'-endonucleasic mode. Neo-synthesized pregenomic RNA (pgRNA) are encapsidated together with the P protein, and reverse-transcribed inside the nucleocapsid. Initiation of reverse-transcription occurs first by binding the epsilon loop on the pgRNA genome, and is initiated by protein priming, thereby the 5'-end of (-)DNA is covalently linked to P protein. Partial (+)DNA is synthesized from the (-)DNA template and generates the relaxed circular DNA (RC-DNA) genome. After budding and infection, the RC-DNA migrates in the nucleus, and is converted into a plasmid-like covalently closed circular DNA (cccDNA). The activity of P protein does not seem to be necessary for cccDNA generation, and is presumably released from (+)DNA by host nuclear DNA repair machinery. In Gorilla gorilla (western gorilla), this protein is Protein P.